A 475-amino-acid chain; its full sequence is MTKQYKNYVNGEWKLSENEIKIYEPASGAELGSVPAMSTEEVDYVYASAKKAQPAWRSLSYIERAAYLHKVADILMRDKEKIGAVLSKEVAKGYKSAVSEVVRTAEIINYAAEEGLRMEGEVLEGGSFEAASKKKIAVVRREPVGLVLAISPFNYPVNLAGSKIAPALIAGNVIAFKPPTQGSISGLLLAEAFAEAGLPAGVFNTITGRGSEIGDYIVEHQAVNFINFTGSTGIGERIGKMAGMRPIMLELGGKDSAIVLEDADLELTAKNIIAGAFGYSGQRCTAVKRVLVMESVADELVEKIREKVLALTIGNPEDDADITPLIDTKSADYVEGLINDANDKGAAALTEIKREGNLICPILFDKVTTDMRLAWEEPFGPVLPIIRVTSVEEAIEISNKSEYGLQASIFTNDFPRAFGIAEQLEVGTVHINNKTQRGTDNFPFLGAKKSGAGIQGVKYSIEAMTTVKSVVFDIK.

R103 lines the substrate pocket. S151 provides a ligand contact to NADP(+). Position 154–155 (N154–Y155) interacts with substrate. NADP(+) contacts are provided by residues K177, T180, D215, and G230–L251. Active-site residues include E250 and C284. Residue R283–T285 participates in substrate binding. Residue E377 coordinates NADP(+). R437 contributes to the substrate binding site.

It belongs to the aldehyde dehydrogenase family. As to quaternary structure, homotetramer.

It carries out the reaction D-glyceraldehyde 3-phosphate + NADP(+) + H2O = (2R)-3-phosphoglycerate + NADPH + 2 H(+). The chain is NADP-dependent glyceraldehyde-3-phosphate dehydrogenase (gapN) from Streptococcus mutans serotype c (strain ATCC 700610 / UA159).